The chain runs to 246 residues: Nuclear transcription factor Y subunit C-2 (246 aa).

Disordered stretches follow at residues 1–35 (MDNQ…AVPH) and 205–246 (QQGA…PSSE). Positions 9-21 (AGQPAAAGAGAPV) are enriched in low complexity.

It belongs to the NFYC/HAP5 subunit family. In terms of assembly, heterotrimeric transcription factor composed of three components, NF-YA, NF-YB and NF-YC. NF-YB and NF-YC must interact and dimerize for NF-YA association and DNA binding. Interacts with NFYB8, NFYB10 and HD5/NFYB11.

The protein localises to the nucleus. The protein resides in the cytoplasm. Functionally, probable transcription factor involved in the regulation of flowering time under long day (LD) conditions. Functions as a repressor of flowering, independently of HD1 and GHD7. Controls flowering time by negatively regulating the expression of EHD1 and HD3A. Component of the NF-Y/HAP transcription factor complex. This is Nuclear transcription factor Y subunit C-2 from Oryza sativa subsp. japonica (Rice).